The primary structure comprises 76 residues: Small ribosomal subunit protein uS17 (76 aa).

It belongs to the universal ribosomal protein uS17 family. As to quaternary structure, part of the 30S ribosomal subunit.

In terms of biological role, one of the primary rRNA binding proteins, it binds specifically to the 5'-end of 16S ribosomal RNA. The chain is Small ribosomal subunit protein uS17 from Ruegeria pomeroyi (strain ATCC 700808 / DSM 15171 / DSS-3) (Silicibacter pomeroyi).